We begin with the raw amino-acid sequence, 143 residues long: Hypoxic response protein 1 (143 aa).

CBS domains are found at residues 8-65 (MNAG…GLDP) and 73-131 (LARD…IVQF). Residues Cys14 and Cys39 are joined by a disulfide bond. Zn(2+) contacts are provided by His97 and His122.

Homodimer.

It localises to the secreted. Its function is as follows. Unlike some other CBS-domain containing proteins does not seem to bind AMP. This Mycobacterium tuberculosis (strain CDC 1551 / Oshkosh) protein is Hypoxic response protein 1 (hrp1).